A 388-amino-acid polypeptide reads, in one-letter code: Formate-dependent phosphoribosylglycinamide formyltransferase (388 aa).

N(1)-(5-phospho-beta-D-ribosyl)glycinamide contacts are provided by residues 11–12 (EL) and glutamate 71. Residues arginine 103, lysine 144, 149 to 154 (SSGKGQ), 184 to 187 (EEFI), and glutamate 192 each bind ATP. Residues 108 to 300 (DLAAKELGLK…EFELHLRAVL (193 aa)) form the ATP-grasp domain. Mg(2+) is bound by residues glutamate 257 and glutamate 270. Residues aspartate 277, lysine 349, and 356 to 357 (RR) each bind N(1)-(5-phospho-beta-D-ribosyl)glycinamide.

It belongs to the PurK/PurT family. In terms of assembly, homodimer.

The enzyme catalyses N(1)-(5-phospho-beta-D-ribosyl)glycinamide + formate + ATP = N(2)-formyl-N(1)-(5-phospho-beta-D-ribosyl)glycinamide + ADP + phosphate + H(+). The protein operates within purine metabolism; IMP biosynthesis via de novo pathway; N(2)-formyl-N(1)-(5-phospho-D-ribosyl)glycinamide from N(1)-(5-phospho-D-ribosyl)glycinamide (formate route): step 1/1. Functionally, involved in the de novo purine biosynthesis. Catalyzes the transfer of formate to 5-phospho-ribosyl-glycinamide (GAR), producing 5-phospho-ribosyl-N-formylglycinamide (FGAR). Formate is provided by PurU via hydrolysis of 10-formyl-tetrahydrofolate. This is Formate-dependent phosphoribosylglycinamide formyltransferase from Bacteroides fragilis (strain ATCC 25285 / DSM 2151 / CCUG 4856 / JCM 11019 / LMG 10263 / NCTC 9343 / Onslow / VPI 2553 / EN-2).